A 38-amino-acid polypeptide reads, in one-letter code: Allatostatin-C (38 aa).

Residues Met1 to Asp19 constitute a propeptide that is removed on maturation. Pyrrolidone carboxylic acid; partial is present on Gln22.

Belongs to the allatostatin family. As to expression, in its non-pyroglutamate form, expressed in antennal lobe (AL), corpora cardiaca (CC), corpora allata (CA) and gnathal ganglion (GNG) with expression in AL detected in most animals and expression in CC, CA and GNG detected in few animals (at protein level). In its pyroglutamate form, expressed in antennal lobe (AL), corpora cardiaca (CC) and corpora allata (CA) with expression detected in few animals (at protein level). Not expressed in GNG (protein level).

The protein localises to the secreted. Strongly inhibits juvenile hormone biosynthesis. In Agrotis ipsilon (Black cutworm moth), this protein is Allatostatin-C.